The sequence spans 84 residues: Cytochrome b559 subunit alpha (84 aa).

A helical membrane pass occupies residues 24-38 (IIHAVTLPAIFIAGF). A heme-binding site is contributed by His-26.

Belongs to the PsbE/PsbF family. Heterodimer of an alpha subunit and a beta subunit. PSII is composed of 1 copy each of membrane proteins PsbA, PsbB, PsbC, PsbD, PsbE, PsbF, PsbH, PsbI, PsbJ, PsbK, PsbL, PsbM, PsbT, PsbX, PsbY, Psb30/Ycf12, peripheral proteins PsbO, CyanoQ (PsbQ), PsbU, PsbV and a large number of cofactors. It forms dimeric complexes. It depends on heme b as a cofactor.

The protein localises to the cellular thylakoid membrane. Its function is as follows. This b-type cytochrome is tightly associated with the reaction center of photosystem II (PSII). PSII is a light-driven water:plastoquinone oxidoreductase that uses light energy to abstract electrons from H(2)O, generating O(2) and a proton gradient subsequently used for ATP formation. It consists of a core antenna complex that captures photons, and an electron transfer chain that converts photonic excitation into a charge separation. The protein is Cytochrome b559 subunit alpha of Prochlorococcus marinus subsp. pastoris (strain CCMP1986 / NIES-2087 / MED4).